The chain runs to 1388 residues: Dicer-like protein 2 (1388 aa).

The region spanning 23–203 (MLEASMKENI…LLTVESNLDA (181 aa)) is the Helicase ATP-binding domain. 36–43 (MDTGSGKT) is a binding site for ATP. Residues 144 to 147 (DEAH) carry the DEAH box motif. The Helicase C-terminal domain occupies 371 to 537 (SLLNFLDSLD…DDERQLQSVS (167 aa)). In terms of domain architecture, Dicer dsRNA-binding fold spans 564 to 658 (AMAHLHHFCA…LPLTKRPELK (95 aa)). 2 RNase III domains span residues 919-1059 (ATRL…MDGG) and 1098-1281 (NERL…VDSG). Mg(2+) is bound by residues glutamate 1137, aspartate 1267, and glutamate 1270.

This sequence belongs to the helicase family. Dicer subfamily. Requires Mg(2+) as cofactor. The cofactor is Mn(2+).

Dicer-like endonuclease involved in cleaving double-stranded RNA in the RNA interference (RNAi) pathway. Produces 21 to 25 bp dsRNAs (siRNAs) which target the selective destruction of homologous RNAs leading to sequence-specific suppression of gene expression, called post-transcriptional gene silencing (PTGS). Part of a broad host defense response against viral infection and transposons. The chain is Dicer-like protein 2 (dcl2) from Neosartorya fischeri (strain ATCC 1020 / DSM 3700 / CBS 544.65 / FGSC A1164 / JCM 1740 / NRRL 181 / WB 181) (Aspergillus fischerianus).